Here is a 213-residue protein sequence, read N- to C-terminus: MEHEFWQKKWASNVIGFHLPDTNPILTQYWSALEPKRNETVFVPLCGKSMDLDWLAERHHSVTGVELSQIAVRAFFAERLYTPTVTQLSSTLELYEFDEFTIYSGDYFVAPIEAADLIYDRAALVALPKEMREEYTQVLRSRLKEGGRILLVTLDYDQNEMAGPPFSVPEEEVRALFSGMKITRLQRDEADAEHPKIKKGLSRFAEEVWLIEN.

S-adenosyl-L-methionine-binding residues include Trp-10, Leu-45, Glu-66, and Arg-121.

It belongs to the class I-like SAM-binding methyltransferase superfamily. TPMT family.

The protein resides in the cytoplasm. The enzyme catalyses S-adenosyl-L-methionine + a thiopurine = S-adenosyl-L-homocysteine + a thiopurine S-methylether.. This is Thiopurine S-methyltransferase from Aliivibrio fischeri (strain MJ11) (Vibrio fischeri).